Consider the following 259-residue polypeptide: Probable dihydroorotate dehydrogenase B (NAD(+)), electron transfer subunit (259 aa).

The FAD-binding FR-type domain occupies 1–89; the sequence is MLPLNVTITQ…RGPFGKGFTL (89 aa). [2Fe-2S] cluster-binding residues include Cys-211, Cys-216, Cys-219, and Cys-229.

This sequence belongs to the PyrK family. As to quaternary structure, heterotetramer of 2 PyrK and 2 PyrD type B subunits. [2Fe-2S] cluster serves as cofactor. It depends on FAD as a cofactor.

The protein operates within pyrimidine metabolism; UMP biosynthesis via de novo pathway; orotate from (S)-dihydroorotate (NAD(+) route): step 1/1. In terms of biological role, responsible for channeling the electrons from the oxidation of dihydroorotate from the FMN redox center in the PyrD type B subunit to the ultimate electron acceptor NAD(+). In Methanosarcina acetivorans (strain ATCC 35395 / DSM 2834 / JCM 12185 / C2A), this protein is Probable dihydroorotate dehydrogenase B (NAD(+)), electron transfer subunit.